Here is a 384-residue protein sequence, read N- to C-terminus: uncharacterized protein (384 aa).

Positions 1-116 (MTEMPKKKFS…FPAAPPPMDS (116 aa)) are disordered. 2 stretches are compositionally biased toward basic and acidic residues: residues 14-70 (ARGD…RAGD) and 78-95 (RFKDKDRDKPRYGDDRPR). Residues G318, I338, and L347 each contribute to the S-adenosyl-L-methionine site.

The protein belongs to the class IV-like SAM-binding methyltransferase superfamily. RNA methyltransferase TrmH family.

This is an uncharacterized protein from Synechocystis sp. (strain ATCC 27184 / PCC 6803 / Kazusa).